A 578-amino-acid chain; its full sequence is Sulfite reductase [NADPH] hemoprotein beta-component (578 aa).

The interval 1–21 (MTNTLAGPDRSRDISQPLEKL) is disordered. Positions 443, 449, 488, and 492 each coordinate [4Fe-4S] cluster. Cys492 lines the siroheme pocket.

This sequence belongs to the nitrite and sulfite reductase 4Fe-4S domain family. In terms of assembly, alpha(8)-beta(8). The alpha component is a flavoprotein, the beta component is a hemoprotein. The cofactor is siroheme. It depends on [4Fe-4S] cluster as a cofactor.

It catalyses the reaction hydrogen sulfide + 3 NADP(+) + 3 H2O = sulfite + 3 NADPH + 4 H(+). It participates in sulfur metabolism; hydrogen sulfide biosynthesis; hydrogen sulfide from sulfite (NADPH route): step 1/1. Its function is as follows. Component of the sulfite reductase complex that catalyzes the 6-electron reduction of sulfite to sulfide. This is one of several activities required for the biosynthesis of L-cysteine from sulfate. The polypeptide is Sulfite reductase [NADPH] hemoprotein beta-component (Methylocella silvestris (strain DSM 15510 / CIP 108128 / LMG 27833 / NCIMB 13906 / BL2)).